The chain runs to 100 residues: UPF0213 protein YhbQ (100 aa).

Residues threonine 2 to arginine 77 enclose the GIY-YIG domain.

Belongs to the UPF0213 family.

The polypeptide is UPF0213 protein YhbQ (Salmonella arizonae (strain ATCC BAA-731 / CDC346-86 / RSK2980)).